A 228-amino-acid chain; its full sequence is Large ribosomal subunit protein uL23m (228 aa).

The disordered stretch occupies residues 194–228 (PEEEGWSEVEENLPLDESAESAAEESSSKGSETRQ). Residues 195–216 (EEEGWSEVEENLPLDESAESAA) are compositionally biased toward acidic residues.

This sequence belongs to the universal ribosomal protein uL23 family. Component of the mitochondrial large ribosomal subunit (mt-LSU). Mature N.crassa 74S mitochondrial ribosomes consist of a small (37S) and a large (54S) subunit. The 37S small subunit contains a 16S ribosomal RNA (16S mt-rRNA) and 32 different proteins. The 54S large subunit contains a 23S rRNA (23S mt-rRNA) and 42 different proteins. uL23m forms the wall of the exit tunnel.

The protein resides in the mitochondrion. Functionally, component of the mitochondrial ribosome (mitoribosome), a dedicated translation machinery responsible for the synthesis of mitochondrial genome-encoded proteins, including at least some of the essential transmembrane subunits of the mitochondrial respiratory chain. The mitoribosomes are attached to the mitochondrial inner membrane and translation products are cotranslationally integrated into the membrane. The protein is Large ribosomal subunit protein uL23m (mrp20) of Neurospora crassa (strain ATCC 24698 / 74-OR23-1A / CBS 708.71 / DSM 1257 / FGSC 987).